The sequence spans 392 residues: Putative purine permease 19 (392 aa).

Residues 1–16 (MGFHTKSPDRVTHEEE) are compositionally biased toward basic and acidic residues. The disordered stretch occupies residues 1–29 (MGFHTKSPDRVTHEEEANIGVDNQPRETT). Position 30 is a phosphoserine (S30). 10 helical membrane passes run 46–66 (ICIF…TLLL), 88–108 (WLQS…LLLW), 128–148 (LFLL…LYAI), 154–174 (VFFL…TTII), 182–202 (WIIL…TSSG), 220–240 (WCAF…QLGF), 254–274 (VILM…VGLF), 300–320 (LIGL…LVCL), 325–345 (FSNV…VLAF), and 354–374 (FFKE…VYSL).

This sequence belongs to the purine permeases (TC 2.A.7.14) family.

The protein resides in the membrane. In Arabidopsis thaliana (Mouse-ear cress), this protein is Putative purine permease 19 (PUP19).